The chain runs to 89 residues: Large ribosomal subunit protein bL27 (89 aa).

The disordered stretch occupies residues methionine 1 to leucine 21.

This sequence belongs to the bacterial ribosomal protein bL27 family.

This chain is Large ribosomal subunit protein bL27, found in Brucella anthropi (strain ATCC 49188 / DSM 6882 / CCUG 24695 / JCM 21032 / LMG 3331 / NBRC 15819 / NCTC 12168 / Alc 37) (Ochrobactrum anthropi).